A 391-amino-acid polypeptide reads, in one-letter code: Suppressor APC domain-containing protein 2 (391 aa).

Residues 1–20 (MAVAAMAERGRLSHAAPAPS) are disordered. Phosphothreonine is present on T218. Positions 226 to 277 (SLLKQMKELDQEQEVLLQGLEMMARGRDWYQQQLQRVQERQRRLSQSRAAAD) form a coiled coil. S283 carries the post-translational modification Phosphoserine. A coiled-coil region spans residues 340–381 (LKEQNRLLTQEVTDKSERITQLEQEKSALIKQLFEARALSQQ).

Interacts with a spindle orientation complex at least composed of GNAI1, GPSM2 and NUMA1. Interacts with GPSM2 (via TPR motifs); this interaction is required to prevent GPSM2 anchoring at the mitotic apical cortex and is inhibited in presence of NUMA1 in a dose dependent manner. Interacts with PARD3. As to expression, expressed in the retina. Expressed in retinal progenitor cells and newly differentiated neurons but not in mature retinal cells (at protein level).

The protein localises to the cytoplasm. It localises to the nucleus. It is found in the cell cortex. The protein resides in the apical cell membrane. Its subcellular location is the cell junction. The protein localises to the tight junction. In terms of biological role, plays a role in planar mitotic spindle orientation in retinal progenitor cells (RPCs) and promotes the production of symmetric terminal divisions. Negatively regulates the mitotic apical cortex localization of GPSM2. Involved also in positive regulation of cell proliferation and tumor cell growth. The polypeptide is Suppressor APC domain-containing protein 2 (Mus musculus (Mouse)).